The following is a 554-amino-acid chain: Hedycaryol synthase (554 aa).

Residues Arg270, Asp307, Asp311, Arg449, and Asp452 each coordinate (2E,6E)-farnesyl diphosphate. Residues Asp307 and Asp311 each coordinate Mg(2+). A DDXXD motif motif is present at residues 307–311; that stretch reads DDTYD. The Mg(2+) site is built by Asp452, Ser456, and Glu460.

The protein belongs to the terpene synthase family. The cofactor is Mg(2+). As to expression, specifically expressed in flowers.

It catalyses the reaction (2E,6E)-farnesyl diphosphate + H2O = (2E,6E)-hedycaryol + diphosphate. It participates in secondary metabolite biosynthesis; terpenoid biosynthesis. Sesquiterpene synthase that catalyzes the formation of sesquiterpenes and sesquiterpenoid alcohols. Converts farnesyl diphosphate (FPP) to hedycaryol. Hedycaryol is likely to be one of the terpenes that attract insects for pollination of Camellia brevistyla. The sequence is that of Hedycaryol synthase from Camellia brevistyla.